A 499-amino-acid polypeptide reads, in one-letter code: uncharacterized protein (499 aa).

Helical transmembrane passes span 5 to 25 (FLLV…YNAV), 79 to 99 (LGLR…TYLL), 110 to 130 (ALLS…ARYA), 132 to 152 (PEVP…EYFT), 170 to 190 (VLTK…FYLL), 203 to 223 (YAGT…QYLV), 252 to 272 (ALDI…ALFW), 286 to 306 (VWFS…PVYI), 332 to 352 (LSLI…SLYF), 354 to 374 (FSAT…LKKY), and 377 to 397 (LPAF…LPYV).

The protein belongs to the glycosyltransferase 39 family.

The protein localises to the cell membrane. This is an uncharacterized protein from Aquifex aeolicus (strain VF5).